The following is a 309-amino-acid chain: Ribonuclease Z (309 aa).

Zn(2+)-binding residues include His63, His65, Asp67, His68, His141, Asp212, and His270. Residue Asp67 is the Proton acceptor of the active site.

The protein belongs to the RNase Z family. As to quaternary structure, homodimer. It depends on Zn(2+) as a cofactor.

It catalyses the reaction Endonucleolytic cleavage of RNA, removing extra 3' nucleotides from tRNA precursor, generating 3' termini of tRNAs. A 3'-hydroxy group is left at the tRNA terminus and a 5'-phosphoryl group is left at the trailer molecule.. Functionally, zinc phosphodiesterase, which displays some tRNA 3'-processing endonuclease activity. Probably involved in tRNA maturation, by removing a 3'-trailer from precursor tRNA. The sequence is that of Ribonuclease Z from Halalkalibacterium halodurans (strain ATCC BAA-125 / DSM 18197 / FERM 7344 / JCM 9153 / C-125) (Bacillus halodurans).